Reading from the N-terminus, the 270-residue chain is Short chain dehydrogenase/reductase dpfgG (270 aa).

The NADP(+) site is built by Ile18, Asp69, Asn96, Lys130, Lys171, Ile200, and Asn204. The active-site Lowers pKa of active site Tyr is the Lys171.

This sequence belongs to the short-chain dehydrogenases/reductases (SDR) family.

The protein operates within secondary metabolite biosynthesis; terpenoid biosynthesis. Short chain dehydrogenase/reductase; part of the gene cluster that mediates the biosynthesis of diterpenoid pyrones. The first step of the pathway is the synthesis of the alpha-pyrone moiety by the polyketide synthase dpfgA via condensation of one acetyl-CoA starter unit with 3 malonyl-CoA units and 2 methylations. The alpha-pyrone is then combined with geranylgeranyl pyrophosphate (GGPP) formed by the GGPP synthase dpfgD through the action of the prenyltransferase dpfgC to yield a linear alpha-pyrone diterpenoid. Subsequent steps in the diterpenoid pyrone biosynthetic pathway involve the decalin core formation, which is initiated by the epoxidation of the C10-C11 olefin by the FAD-dependent oxidoreductase dpfgE, and is followed by a cyclization cascade catalyzed by the terpene cyclase dpfgB. The short chain dehydrogenase/reductase dpfgG then oxidizes the 8S hydroxy group to a ketone and the short chain dehydrogenase/reductase dpfgH reduces the ketone to the 8R hydroxy group to yield higginsianin B. Higginsianin B is further methylated by the methyltransferase dpfgI to produce the intermediate named FDDP B. The cytochrome P450 monooxygenase dfgpJ then catalyzes a three-step oxidation at C-27 to generate a carboxylic acid as well as C-26 hydroxylation. Finally, methyltransferase dpfgK methylates the carboxylic acid generated by dpfgJ, yielding the final diterpenoid pyrones from the pathway which were named FDDP D and FDDP E. This is Short chain dehydrogenase/reductase dpfgG from Gibberella zeae (strain ATCC MYA-4620 / CBS 123657 / FGSC 9075 / NRRL 31084 / PH-1) (Wheat head blight fungus).